The primary structure comprises 38 residues: Alpha-conotoxin PeIA (38 aa).

Positions 1–21 are excised as a propeptide; that stretch reads FDGRNAAANDKASDLVALTVR. 2 disulfide bridges follow: cysteine 23–cysteine 29 and cysteine 24–cysteine 37. The segment at 25 to 27 is ser-Xaa-Pro motif, crucial for potent interaction with nAChR; that stretch reads SHP. Cysteine amide is present on cysteine 37.

Belongs to the conotoxin A superfamily. In terms of processing, the hydroxylation at position Pro-27 is critical, since an hydroxylation at this position decreases potency of the toxin to inhibit both alpha-3-beta-2 (1300-fold) and alpha-6/alpha-3-beta-2-beta-3 (130-fold) nAChRs. A non-modified residue at position Pro-34 is critical, since a hydroxylation at this position decreases potency of the toxin to inhibit alpha-3-beta-2 (1-45-fold) and increases potency to inhibit alpha-6/alpha-3-beta-2-beta-3 (1.77-fold) nAChRs. In terms of tissue distribution, expressed by the venom duct.

It localises to the secreted. Alpha-conotoxins act on postsynaptic membranes, they bind to the nicotinic acetylcholine receptors (nAChR) and thus inhibit them. This synthetic peptide potently and reversibly blocks alpha-9-alpha-10/CHRNA9-CHRNA10 nAChR (IC(50)=6.9-54.9 nM), alpha-3-beta-2/CHRNA3-CHRNB2 (IC(50)=9.7-97.5 nM) and alpha-6/alpha-3-beta-2-beta-3 (CHRNA6/CHRNA3-CHRNB2-CHRNB3) (IC(50)=11.1-17.2 nM). It also inhibits alpha-6/alpha-3-beta-4 (CHRNA6/CHRNA3-CHRNB4) nAChR with a higher potency on human (IC(50)=6.75 nM) than on rat receptors (IC(50)=130-147 nM). Also shows a weak ability to inhibit alpha-3-beta-4/CHRNA3-CHRNB4 (IC(50)=480-1500 nM). This synthetic toxin also inhibits N-type calcium channels (Ca2.2/CACNA1B) (IC(50)=1.1 nM) via the activation of the G protein-coupled GABA(B) receptor in DRG neurons. Also exhibits inhibition of D.melanogaster alpha-7/CHRNA7 nAChRs. The protein is Alpha-conotoxin PeIA of Conus pergrandis (Grand cone).